A 468-amino-acid chain; its full sequence is ATP synthase subunit beta (468 aa).

148-155 (GGAGVGKT) contributes to the ATP binding site.

The protein belongs to the ATPase alpha/beta chains family. F-type ATPases have 2 components, CF(1) - the catalytic core - and CF(0) - the membrane proton channel. CF(1) has five subunits: alpha(3), beta(3), gamma(1), delta(1), epsilon(1). CF(0) has three main subunits: a(1), b(2) and c(9-12). The alpha and beta chains form an alternating ring which encloses part of the gamma chain. CF(1) is attached to CF(0) by a central stalk formed by the gamma and epsilon chains, while a peripheral stalk is formed by the delta and b chains.

It is found in the cell inner membrane. The catalysed reaction is ATP + H2O + 4 H(+)(in) = ADP + phosphate + 5 H(+)(out). Produces ATP from ADP in the presence of a proton gradient across the membrane. The catalytic sites are hosted primarily by the beta subunits. This is ATP synthase subunit beta from Xanthomonas oryzae pv. oryzae (strain KACC10331 / KXO85).